The chain runs to 127 residues: UPF0102 protein Gura_3756 (127 aa).

The protein belongs to the UPF0102 family.

This is UPF0102 protein Gura_3756 from Geotalea uraniireducens (strain Rf4) (Geobacter uraniireducens).